A 547-amino-acid chain; its full sequence is Leiomodin-2 (547 aa).

Residues 1 to 47 (MSTFGYRRGLSKYESIDEDELLASLSAEELKELERELEDIEPDRNLP) are interaction with tropomyosin alpha. Interaction with actin stretches follow at residues 1-161 (MSTF…SDNS), 162-497 (KPKI…KEIK), and 521-540 (AHENLMEAIRGSSIKQLKRV). 3 positions are modified to phosphoserine: Ser11, Ser15, and Ser24. The stretch at 16 to 41 (IDEDELLASLSAEELKELERELEDIE) forms a coiled coil. Disordered stretches follow at residues 91 to 162 (KVAE…DNSK) and 352 to 533 (MDKQ…RGSS). Acidic residues-rich tracts occupy residues 95–104 (DKEESEEELI) and 112–139 (VSEEVYTEEEEEESQEEEEEEDSDEEER). Residues 113-148 (SEEVYTEEEEEESQEEEEEEDSDEEERTIETAKGIN) adopt a coiled-coil conformation. Residues 149–160 (GTVNYDSVNSDN) show a composition bias toward polar residues. Residues 352–367 (MDKQRQKRLQEQKQQE) are compositionally biased toward basic and acidic residues. Ser400 is subject to Phosphoserine. Residues 419-449 (ATPPPPPPPPPPPPPSSQRLPPPPPPPPPPL) are compositionally biased toward pro residues. Polar residues predominate over residues 465–475 (QQESAQRALQN). The segment covering 477–487 (QKKKKGKKVKK) has biased composition (basic residues). Over residues 494 to 512 (KEIKNSLRSVQEKKMEDSS) the composition is skewed to basic and acidic residues. Positions 521–540 (AHENLMEAIRGSSIKQLKRV) constitute a WH2 domain.

Belongs to the tropomodulin family. As to quaternary structure, can bind at least three actin monomers and thereby provides a nucleus for actin filament formation. Interacts (via N-terminus) with tropomyosin alpha (TPM1) (via N-terminus). May also interact with TPM2 (via N-terminus). Interacts with FLII. Specifically expressed in heart and skeletal muscles, with higher levels in heart (at protein level). Not expressed in other tissues.

The protein resides in the cytoplasm. It localises to the myofibril. Its subcellular location is the sarcomere. It is found in the m line. The protein localises to the cytoskeleton. Mediates nucleation of actin filaments and thereby promotes actin polymerization. Plays a role in the regulation of actin filament length. Required for normal sarcomere organization in the heart, and for normal heart function. This chain is Leiomodin-2 (LMOD2), found in Homo sapiens (Human).